The chain runs to 217 residues: Protein-L-isoaspartate O-methyltransferase (217 aa).

Residue serine 61 is part of the active site.

It belongs to the methyltransferase superfamily. L-isoaspartyl/D-aspartyl protein methyltransferase family.

It localises to the cytoplasm. The enzyme catalyses [protein]-L-isoaspartate + S-adenosyl-L-methionine = [protein]-L-isoaspartate alpha-methyl ester + S-adenosyl-L-homocysteine. Functionally, catalyzes the methyl esterification of L-isoaspartyl residues in peptides and proteins that result from spontaneous decomposition of normal L-aspartyl and L-asparaginyl residues. It plays a role in the repair and/or degradation of damaged proteins. The polypeptide is Protein-L-isoaspartate O-methyltransferase (Syntrophotalea carbinolica (strain DSM 2380 / NBRC 103641 / GraBd1) (Pelobacter carbinolicus)).